We begin with the raw amino-acid sequence, 369 residues long: L-lactate oxidase (369 aa).

An FMN hydroxy acid dehydrogenase domain is found at 13–369 (EKKLNVLNLD…KNAKLLNIRY (357 aa)). Tyr39 lines the pyruvate pocket. FMN-binding positions include 92–94 (PAA), Ser121, and Gln143. Tyr145 lines the pyruvate pocket. Thr171 is an FMN binding site. Residue Arg180 coordinates pyruvate. 2 residues coordinate FMN: Lys240 and Ser262. His264 and Arg267 together coordinate pyruvate. Residue His264 is the Proton acceptor of the active site. Residues 295-299 (DSGIR) and Arg319 contribute to the FMN site.

It belongs to the FMN-dependent alpha-hydroxy acid dehydrogenase family. Homotetramer. Requires FMN as cofactor.

It catalyses the reaction (S)-lactate + O2 = pyruvate + H2O2. In terms of biological role, catalyzes the oxidation of (S)-lactate (L-lactate) to pyruvate, with a reduction of O2 to H2O2. May be involved in the utilization of L-lactate as an energy source for growth. This chain is L-lactate oxidase, found in Lentilactobacillus hilgardii (strain ATCC 8290 / DSM 20176 / CCUG 30140 / JCM 1155 / KCTC 3500 / NBRC 15886 / NCIMB 8040 / NRRL B-1843 / 9).